We begin with the raw amino-acid sequence, 540 residues long: Membrane protein insertase YidC (540 aa).

A helical transmembrane segment spans residues 6–26 (NILLIALALVSFLLFQQWQVA). The interval 36-63 (QAQSSSTLPAPSFADELDPVPGQQQASA) is disordered. The next 4 helical transmembrane spans lie at 342–362 (AFIQ…TFIV), 417–437 (LGGC…YWAL), 455–475 (LSAQ…MFLI), and 496–516 (PVMF…YWLV).

It belongs to the OXA1/ALB3/YidC family. Type 1 subfamily. In terms of assembly, interacts with the Sec translocase complex via SecD. Specifically interacts with transmembrane segments of nascent integral membrane proteins during membrane integration.

It is found in the cell inner membrane. In terms of biological role, required for the insertion and/or proper folding and/or complex formation of integral membrane proteins into the membrane. Involved in integration of membrane proteins that insert both dependently and independently of the Sec translocase complex, as well as at least some lipoproteins. Aids folding of multispanning membrane proteins. This chain is Membrane protein insertase YidC, found in Vibrio campbellii (strain ATCC BAA-1116).